The sequence spans 717 residues: Trimethylamine N-oxide transport system permease protein TmoV (717 aa).

17 helical membrane passes run 10 to 30 (FFQW…IEVP), 69 to 89 (LPPL…FLMN), 120 to 140 (FMTF…ETIV), 153 to 173 (WAEL…ILGY), 175 to 195 (LSGK…SVFG), 206 to 226 (FILV…VMAF), 238 to 258 (ILLV…IVLF), 265 to 285 (AVII…LLGL), 319 to 339 (ILIG…ISAF), 355 to 375 (QLNI…AILL), 402 to 422 (ILFF…GSFY), 452 to 472 (IWDT…VDVL), 488 to 508 (LVLV…LVVG), 527 to 547 (LYMA…VGII), 574 to 594 (LIPV…AVIV), 643 to 663 (MLGL…GAFI), and 683 to 703 (GIGL…DHLI). The ABC transmembrane type-1 1 domain occupies 200 to 379 (SMQTLSFILV…LIAILLDKMS (180 aa)). Residues 523–703 (ALVTLYMATF…FIGLIFDHLI (181 aa)) enclose the ABC transmembrane type-1 2 domain.

This sequence belongs to the binding-protein-dependent transport system permease family. The complex is probably composed of two ATP-binding proteins (TmoW), two transmembrane proteins (TmoV) and a solute-binding protein (TmoX).

The protein localises to the cell inner membrane. Functionally, part of the ABC transporter complex TmoXWV involved in trimethylamine N-oxide (TMAO) import. Responsible for the translocation of the substrate across the membrane. This Pelagibacter ubique (strain HTCC1062) protein is Trimethylamine N-oxide transport system permease protein TmoV.